The chain runs to 805 residues: MRYDFSKTEKKWQARWKQQETFKTGEAPEKPKYYVLDMFPYPSGSGLHVGHLEGYTASDISARYRRSRGYNVLHPMGWDAFGLPAEQFAIKTGTHPSDTTQKNIANFKETLQAMGFSYDWSREINTTDPGYFQWTQWIFLKLHEMGLAYMSEVDVNWCVELRAVLANEEVEEKLADGLTVVRRPLRQWVLKITAYADRLLEDLDGLDWPENVKQMQRNWIGRSEGVEVDFELRCHRTMLRVYTTRPDTLFGATYLVISPEHAMAEKLATAQQLVAVKEYIAKAKLKTELERTGLQKDKTGVFTGSYAINPATGEPLPVWISDFVLTSYGTGAIMSVPAHDSRDWEFAKQYGLPIIEVVKSPHDVQQEVFEGKDSTVVNSSNNDISLNGLAFPEAFELMASWLEKKKAGKRKVNYRLRDWIFSRQRYWGEPIPIKHYPDGTLKPETSLPLMLPEVEAYQPTETGESPLANIPEWLNGTDENGPFRRETNTMPQWAGSCWYYLRFIDPHNSKLPVDPAKEAYWMNVDLYIGGAEHAVLHLLYARFWHKVLFDLKVVSTKEPFQRLFNQGMILGEDNEKMSKSRGNVIPADHVLQTYGADAVRLYEMFLGPLEQVKPWNTNGIEGISRFLSRVWRLVWPEPEGTRADLSTLAPSPDLLRRMHKTIKKVAADTENLKFNTAIAEMMVFTNELHRTGEGSRIAVETLLLLLAPYAPHLSEELWEALGHQESISLAPFPEFDPELAQDKEVTIAVQVNGKLRGSFTAAPGSPKEQLLNEAKALEGVKKFLEGVTIMKEIVVPDKLINFAVK.

The short motif at 40–51 (PYPSGSGLHVGH) is the 'HIGH' region element. The 'KMSKS' region motif lies at 576–580 (KMSKS). Lys579 provides a ligand contact to ATP.

This sequence belongs to the class-I aminoacyl-tRNA synthetase family.

Its subcellular location is the cytoplasm. It catalyses the reaction tRNA(Leu) + L-leucine + ATP = L-leucyl-tRNA(Leu) + AMP + diphosphate. The protein is Leucine--tRNA ligase of Chlorobium phaeovibrioides (strain DSM 265 / 1930) (Prosthecochloris vibrioformis (strain DSM 265)).